A 212-amino-acid chain; its full sequence is Protein ERP5 (212 aa).

The N-terminal stretch at 1 to 20 (MKYNIVHGICLLFAITQAVG) is a signal peptide. Residues 21–178 (AVHFYAKSGE…FRNQSESANS (158 aa)) are Lumenal-facing. The 94-residue stretch at 31-124 (TKCFYEHLSR…TLRVFIELEI (94 aa)) folds into the GOLD domain. N-linked (GlcNAc...) asparagine glycosylation is present at Asn-171. A helical membrane pass occupies residues 179–199 (KIMTWSVFQLLILLGTCAFQL). Residues 200-212 (RYLKNFFVKQKVV) are Cytoplasmic-facing.

This sequence belongs to the EMP24/GP25L family.

Its subcellular location is the endoplasmic reticulum membrane. Involved in vesicular protein trafficking. In Saccharomyces cerevisiae (strain ATCC 204508 / S288c) (Baker's yeast), this protein is Protein ERP5 (ERP5).